Consider the following 287-residue polypeptide: ATP synthase subunit a (287 aa).

A run of 6 helical transmembrane segments spans residues 38 to 58, 96 to 116, 139 to 161, 187 to 207, 225 to 245, and 259 to 279; these read DSMVLALLLGGLTLLILWTAA, FIAPLGLVVFVWVFLMNAMDM, VVPTADLSTTMGLALAVLGLRFW, PLFALILGLVNLLMQVIEYVA, LVFMLIALMGGAAALSLSGVL, and LFHILVITLQAFIFMMLALIY.

It belongs to the ATPase A chain family. As to quaternary structure, F-type ATPases have 2 components, CF(1) - the catalytic core - and CF(0) - the membrane proton channel. CF(1) has five subunits: alpha(3), beta(3), gamma(1), delta(1), epsilon(1). CF(0) has three main subunits: a(1), b(2) and c(9-12). The alpha and beta chains form an alternating ring which encloses part of the gamma chain. CF(1) is attached to CF(0) by a central stalk formed by the gamma and epsilon chains, while a peripheral stalk is formed by the delta and b chains.

The protein localises to the cell inner membrane. Functionally, key component of the proton channel; it plays a direct role in the translocation of protons across the membrane. The chain is ATP synthase subunit a from Verminephrobacter eiseniae (strain EF01-2).